The primary structure comprises 318 residues: MERIVITGALGQIGTELVLKCREIYGNDNVLATDIREPEEDSPVNNGPFEVLDVTNREAMMAIVENFKADTLMHMAALLSATAEKNPLLAWDLNMGGLMNALETARTYELHFFTPSSIGAFGDSTPKKDTPQNTIQQPTTMYGVNKVAGELLCQYYFTKFGVDTRSVRFPGLISHVKEPGGGTTDYAVEIYFEAVRKGRYTSYIAKDTYMDMMYMDDAIDAIIKLMEADSDKLVTRNGYNLSAMSFEPEQIKAEIQKHYPGFALDYEVDPVRQAIADSWPDNIDTSYSRKEWGFNPKYDLAGMTELMLKAIEEKEQNK.

This sequence belongs to the NAD(P)-dependent epimerase/dehydratase family.

This is an uncharacterized protein from Staphylococcus haemolyticus (strain JCSC1435).